Reading from the N-terminus, the 229-residue chain is Ion-translocating oxidoreductase complex subunit E (229 aa).

5 consecutive transmembrane segments (helical) span residues 58–78 (LGLG…ISLF), 82–102 (IPHD…VTTI), 105–125 (LMNA…PLIV), 147–167 (AFDG…LGAI), and 201–221 (GLLL…ILAV).

The protein belongs to the NqrDE/RnfAE family. In terms of assembly, the complex is composed of six subunits: RnfA, RnfB, RnfC, RnfD, RnfE and RnfG.

Its subcellular location is the cell inner membrane. Part of a membrane-bound complex that couples electron transfer with translocation of ions across the membrane. The sequence is that of Ion-translocating oxidoreductase complex subunit E from Glaesserella parasuis serovar 5 (strain SH0165) (Haemophilus parasuis).